Reading from the N-terminus, the 124-residue chain is Astakine (124 aa).

An N-terminal signal peptide occupies residues 1–21; sequence MAVSSAVRMLSVACLVVSAAG. Cystine bridges form between C28–C40, C34–C52, C39–C91, C62–C99, and C93–C106.

The protein belongs to the AVIT (prokineticin) family.

It localises to the secreted. Functionally, cytokine directly involved in hematopoiesis. The sequence is that of Astakine from Penaeus monodon (Giant tiger prawn).